A 171-amino-acid chain; its full sequence is Large ribosomal subunit protein uL10 (171 aa).

Belongs to the universal ribosomal protein uL10 family. As to quaternary structure, part of the ribosomal stalk of the 50S ribosomal subunit. The N-terminus interacts with L11 and the large rRNA to form the base of the stalk. The C-terminus forms an elongated spine to which L12 dimers bind in a sequential fashion forming a multimeric L10(L12)X complex.

Functionally, forms part of the ribosomal stalk, playing a central role in the interaction of the ribosome with GTP-bound translation factors. The chain is Large ribosomal subunit protein uL10 from Paramagnetospirillum magneticum (strain ATCC 700264 / AMB-1) (Magnetospirillum magneticum).